We begin with the raw amino-acid sequence, 404 residues long: Glycosylated lysosomal membrane protein (404 aa).

Residues 1-35 (MRGSVERGWGWGHCASSPLLLWTLLLFAAPFGLLG) form the signal peptide. Topologically, residues 36-371 (EKTRQLSLEV…GRLVPTSPGH (336 aa)) are lumenal. Residues N65, N134, N159, N186, and N229 are each glycosylated (N-linked (GlcNAc...) asparagine). The helical transmembrane segment at 372-392 (HGSALGAPGLMLLGGGLVLLL) threads the bilayer. The Cytoplasmic segment spans residues 393–404 (HHRKYSEYQSIN). The Lysosomal targeting motif motif lies at 400-404 (YQSIN).

It belongs to the GLMP family. In terms of assembly, interacts (via lumenal domain) with lysosomal protein MFSD1; the interaction starts while both proteins are still in the endoplasmic reticulum and is required for stabilization of MFSD1 in lysosomes but has no direct effect on its targeting to lysosomes or transporter activity. Post-translationally, highly N-glycosylated. N-glycosylation is essential for GLMP stability and for MFSD1 lysosomal localization.

The protein resides in the lysosome membrane. Required to protect lysosomal transporter MFSD1 from lysosomal proteolysis and for MFSD1 lysosomal localization. The protein is Glycosylated lysosomal membrane protein of Pongo abelii (Sumatran orangutan).